A 332-amino-acid chain; its full sequence is uncharacterized protein (332 aa).

An N-terminal signal peptide occupies residues 1-26 (MSSLGKLLKLTLLGILLSFSCKFVFG).

It localises to the endoplasmic reticulum. This is an uncharacterized protein from Schizosaccharomyces pombe (strain 972 / ATCC 24843) (Fission yeast).